The chain runs to 1225 residues: Clustered mitochondria protein homolog (1225 aa).

A disordered region spans residues 1–22; sequence MAQTNGEMEHSKESPEQITNGN. Positions 281-532 constitute a Clu domain; that stretch reads QESNNQKDLL…RVTPLDVAWN (252 aa). Disordered stretches follow at residues 577 to 605 and 846 to 878; these read EEAAKKEKSSEDTESKEEGSEEKSEEALD and ANGVNGTGQDEGSKKKKKNKNGDSGSPARSAAA. TPR repeat units lie at residues 949 to 982, 991 to 1024, and 1033 to 1066; these read AKLYHQLSMLYYQTDEKDAAVELARKAVIVTERT, ILSYLNLSLFEHASGNTKVALAYIKHAMDLWKII, and ITTMNNAAVMLQHLKQYSDSRKWFEASLSVCESL. Residues 1153–1184 show a composition bias toward polar residues; sequence RTTLGTQIQPQVGQSTADVSAPSQASNSSIDS. The tract at residues 1153 to 1225 is disordered; that stretch reads RTTLGTQIQP…KLRGSKKSSA (73 aa).

The protein belongs to the CLU family. May associate with the eukaryotic translation initiation factor 3 (eIF-3) complex.

The protein resides in the cytoplasm. In terms of biological role, mRNA-binding protein involved in proper cytoplasmic distribution of mitochondria. The polypeptide is Clustered mitochondria protein homolog (Emericella nidulans (strain FGSC A4 / ATCC 38163 / CBS 112.46 / NRRL 194 / M139) (Aspergillus nidulans)).